The sequence spans 490 residues: Katanin p60 ATPase-containing subunit A-like 1 (490 aa).

Methionine 1 carries the post-translational modification N-acetylmethionine. Positions 96–182 (PAVWPPPVPA…ASDGEIPKFD (87 aa)) are disordered. Residues 116–127 (PNREVRPLRKEM) are compositionally biased toward basic and acidic residues. Low complexity predominate over residues 128 to 139 (AGVGARGPVGRA). The span at 143-169 (SKSEKPSASRDKDCRARGRDDKGRKNM) shows a compositional bias: basic and acidic residues. The residue at position 174 (serine 174) is a Phosphoserine. 248–255 (GPPGTGKT) is a binding site for ATP.

This sequence belongs to the AAA ATPase family. Katanin p60 subunit A1 subfamily. A-like 1 sub-subfamily. As to quaternary structure, interacts with KATNB1 and KATNBL1.

It localises to the cytoplasm. Its subcellular location is the cytoskeleton. The protein localises to the spindle pole. The protein resides in the spindle. The catalysed reaction is n ATP + n H2O + a microtubule = n ADP + n phosphate + (n+1) alpha/beta tubulin heterodimers.. In terms of biological role, regulates microtubule dynamics in Sertoli cells, a process that is essential for spermiogenesis and male fertility. Severs microtubules in an ATP-dependent manner, promoting rapid reorganization of cellular microtubule arrays. Has microtubule-severing activity in vitro. This is Katanin p60 ATPase-containing subunit A-like 1 from Oryctolagus cuniculus (Rabbit).